A 322-amino-acid polypeptide reads, in one-letter code: tRNA-dihydrouridine synthase B (322 aa).

Residues 16 to 18 and Gln70 each bind FMN; that span reads PMA. Residue Cys100 is the Proton donor of the active site. FMN-binding positions include Lys139, 200–202, and 224–225; these read NGD and GR.

Belongs to the Dus family. DusB subfamily. FMN is required as a cofactor.

It catalyses the reaction a 5,6-dihydrouridine in tRNA + NAD(+) = a uridine in tRNA + NADH + H(+). The catalysed reaction is a 5,6-dihydrouridine in tRNA + NADP(+) = a uridine in tRNA + NADPH + H(+). Functionally, catalyzes the synthesis of 5,6-dihydrouridine (D), a modified base found in the D-loop of most tRNAs, via the reduction of the C5-C6 double bond in target uridines. The sequence is that of tRNA-dihydrouridine synthase B from Vibrio cholerae serotype O1 (strain ATCC 39315 / El Tor Inaba N16961).